The following is a 55-amino-acid chain: Large ribosomal subunit protein bL32c (55 aa).

The protein belongs to the bacterial ribosomal protein bL32 family.

The protein localises to the plastid. Its subcellular location is the chloroplast. This is Large ribosomal subunit protein bL32c from Nicotiana sylvestris (Wood tobacco).